A 360-amino-acid chain; its full sequence is Protein phosphatase 1L (360 aa).

At 1 to 25 the chain is on the extracellular side; the sequence is MIEDTMTLLSLLGRIMRYFLLRPET. The helical transmembrane segment at 26 to 42 threads the bilayer; sequence LFLLCISLALWSYFFHT. Residues 43–360 are Cytoplasmic-facing; sequence DEVKTIVKSS…FRNSSKTEEH (318 aa). The PPM-type phosphatase domain maps to 92 to 351; sequence NVAVYSIQGR…DNITVMVVKF (260 aa). The Mn(2+) site is built by D128, G129, D302, and D342.

This sequence belongs to the PP2C family. As to quaternary structure, interacts with MAP3K7/TAK1 and MAP3K5. Mg(2+) is required as a cofactor. Mn(2+) serves as cofactor. Expressed in brain, heart, testis, liver, lung and skeletal muscle.

The protein localises to the membrane. The catalysed reaction is O-phospho-L-seryl-[protein] + H2O = L-seryl-[protein] + phosphate. The enzyme catalyses O-phospho-L-threonyl-[protein] + H2O = L-threonyl-[protein] + phosphate. Functionally, acts as a suppressor of the SAPK signaling pathways by associating with and dephosphorylating MAP3K7/TAK1 and MAP3K5, and by attenuating the association between MAP3K7/TAK1 and MAP2K4 or MAP2K6. The polypeptide is Protein phosphatase 1L (Ppm1l) (Mus musculus (Mouse)).